The chain runs to 334 residues: Forkhead box protein N2 (334 aa).

Disordered regions lie at residues 1–52 and 83–108; these read MGPV…SGTT and SPLY…ASSK. A DNA-binding region (fork-head) is located at residues 108–204; that stretch reads KPPYSFSLLI…QALKKQPFSS (97 aa).

It localises to the nucleus. The chain is Forkhead box protein N2 from Xenopus tropicalis (Western clawed frog).